Here is a 523-residue protein sequence, read N- to C-terminus: MFS-type transporter R5 (523 aa).

Positions 19-42 (QLNEATAQRESATNNPNDSSSIDE) are disordered. The span at 21–38 (NEATAQRESATNNPNDSS) shows a compositional bias: polar residues. Residues Asn-35, Asn-94, and Asn-143 are each glycosylated (N-linked (GlcNAc...) asparagine). Helical transmembrane passes span 183–203 (AYLT…GGLL) and 211–231 (AIFW…FTFF). Asn-235 and Asn-250 each carry an N-linked (GlcNAc...) asparagine glycan. Helical transmembrane passes span 291–311 (FIVC…ISIF), 319–339 (YGYS…GSIL), 381–401 (LTIS…YGWL), 408–428 (VASV…VLIA), 443–463 (ALGA…VAAV), and 470–490 (IGIG…LPAL).

Belongs to the major facilitator superfamily.

The protein resides in the membrane. Functionally, MFS-type transporter; part of the gene cluster that mediates the biosynthesis of squalestatin S1 (SQS1, also known as zaragozic acid A), a heavily oxidized fungal polyketide that offers potent cholesterol lowering activity by targeting squalene synthase (SS). The sequence is that of MFS-type transporter R5 from Phoma sp. (strain ATCC 20986 / MF5453).